The following is a 260-amino-acid chain: Large ribosomal subunit protein uL2 (260 aa).

A disordered region spans residues 208–230 (EHPHGGGNHQHIGHPSTVRRDAS).

The protein belongs to the universal ribosomal protein uL2 family.

Its subcellular location is the cytoplasm. The protein is Large ribosomal subunit protein uL2 of Caenorhabditis elegans.